The chain runs to 117 residues: Hemerythrin subunit alpha (117 aa).

Fe cation is bound by residues H24, H53, E57, H72, H76, H105, and D110.

The protein belongs to the hemerythrin family. In terms of assembly, octamer composed of two types of chains: alpha and beta.

Its function is as follows. Hemerythrin is a respiratory protein in blood cells of certain marine worms. The oxygen-binding site in each chain contains two iron atoms. This is Hemerythrin subunit alpha from Lingula reevii (Inarticulated brachiopod).